A 414-amino-acid chain; its full sequence is Isocitrate dehydrogenase [NADP] cytoplasmic (414 aa).

Ser2 is subject to N-acetylserine. Tyr42 carries the post-translational modification Phosphotyrosine. 75-77 is a binding site for NADP(+); the sequence is TIT. Thr77 provides a ligand contact to substrate. Lys81 is modified (N6-acetyllysine). Arg82 contacts NADP(+). Substrate-binding positions include 94–100 and Arg109; that span reads SPNGTIR. Lys126 carries the post-translational modification N6-succinyllysine. Residues Arg132 and Lys212 each contribute to the substrate site. An N6-acetyllysine mark is found at Lys224, Lys233, and Lys243. Asp252 contacts Mn(2+). Residue Lys260 coordinates NADP(+). The Mn(2+) site is built by Asp275 and Asp279. 310 to 315 is a binding site for NADP(+); it reads GTVTRH. An N6-acetyllysine modification is found at Lys321. Asn328 provides a ligand contact to NADP(+). Position 389 is a phosphoserine (Ser389). Lys400 is subject to N6-succinyllysine.

This sequence belongs to the isocitrate and isopropylmalate dehydrogenases family. In terms of assembly, homodimer. It depends on Mg(2+) as a cofactor. The cofactor is Mn(2+). Acetylation at Lys-374 dramatically reduces catalytic activity.

The protein resides in the cytoplasm. Its subcellular location is the cytosol. The enzyme catalyses D-threo-isocitrate + NADP(+) = 2-oxoglutarate + CO2 + NADPH. Its function is as follows. Catalyzes the NADP(+)-dependent oxidative decarboxylation of isocitrate (D-threo-isocitrate) to 2-ketoglutarate (2-oxoglutarate), which is required by other enzymes such as the phytanoyl-CoA dioxygenase. Plays a critical role in the generation of NADPH, an important cofactor in many biosynthesis pathways. May act as a corneal epithelial crystallin and may be involved in maintaining corneal epithelial transparency. The chain is Isocitrate dehydrogenase [NADP] cytoplasmic (IDH1) from Microtus ochrogaster (Prairie vole).